The primary structure comprises 213 residues: Octanoyltransferase (213 aa).

Residues 32 to 207 (DHTPDEIWLV…KLLALLNNPP (176 aa)) form the BPL/LPL catalytic domain. Substrate is bound by residues 71 to 78 (RGGQVTYH), 138 to 140 (SLG), and 151 to 153 (GLA). Cys-169 serves as the catalytic Acyl-thioester intermediate.

This sequence belongs to the LipB family.

It localises to the cytoplasm. The catalysed reaction is octanoyl-[ACP] + L-lysyl-[protein] = N(6)-octanoyl-L-lysyl-[protein] + holo-[ACP] + H(+). The protein operates within protein modification; protein lipoylation via endogenous pathway; protein N(6)-(lipoyl)lysine from octanoyl-[acyl-carrier-protein]: step 1/2. In terms of biological role, catalyzes the transfer of endogenously produced octanoic acid from octanoyl-acyl-carrier-protein onto the lipoyl domains of lipoate-dependent enzymes. Lipoyl-ACP can also act as a substrate although octanoyl-ACP is likely to be the physiological substrate. The protein is Octanoyltransferase of Enterobacter sp. (strain 638).